A 158-amino-acid chain; its full sequence is Dysbindin domain-containing protein 1 (158 aa).

Disordered regions lie at residues 1-50 and 93-158; these read MEPP…VPAP and ADSD…PQED. Residues Ser95 and Ser119 each carry the phosphoserine modification. The segment covering 125–141 has biased composition (basic and acidic residues); sequence TRAEQSHEKQPLGDPER.

Belongs to the dysbindin family.

This Homo sapiens (Human) protein is Dysbindin domain-containing protein 1 (DBNDD1).